Consider the following 437-residue polypeptide: Sorting nexin-30 (437 aa).

Disordered stretches follow at residues 1 to 44 (MAGG…PDLL) and 54 to 73 (LILPNGGTPAGTSSPASSSS). Position 38 is a phosphothreonine (Thr-38). Residue Ser-40 is modified to Phosphoserine. A compositionally biased stretch (low complexity) spans 63–73 (AGTSSPASSSS). In terms of domain architecture, PX spans 89-210 (RDLFVIVDDP…IFLTAKDLNA (122 aa)). A 1,2-diacyl-sn-glycero-3-phospho-(1D-myo-inositol-3-phosphate)-binding residues include Arg-132, Gln-134, Lys-162, and Arg-176. Positions 234 to 437 (KLRTRPLEFA…PLLQEKQEAK (204 aa)) constitute a BAR domain.

The protein belongs to the sorting nexin family. As to quaternary structure, heterodimer; heterodimerizes with SNX4.

The protein resides in the early endosome membrane. Involved in the regulation of endocytosis and in several stages of intracellular trafficking. Together with SNX4, involved in autophagosome assembly. This is Sorting nexin-30 from Homo sapiens (Human).